Here is a 325-residue protein sequence, read N- to C-terminus: Proto-oncogene Mas (325 aa).

The Extracellular segment spans residues 1 to 36 (MDGSNVTSFVVEEPTNISTGRNASVGNAHRQIPIVH). N-linked (GlcNAc...) asparagine glycosylation is found at asparagine 5, asparagine 16, and asparagine 22. Residues 37–61 (WVIMSISPVGFVENGILLWFLCFRM) traverse the membrane as a helical segment. Residues 62–65 (RRNP) lie on the Cytoplasmic side of the membrane. A helical membrane pass occupies residues 66 to 86 (FTVYITHLSIADISLLFCIFI). Topologically, residues 87–104 (LSIDYALDYELSSGHYYT) are extracellular. A helical transmembrane segment spans residues 105–128 (IVTLSVTFLFGYNTGLYLLTAISV). Over 129–149 (ERCLSVLYPIWYRCHRPKYQS) the chain is Cytoplasmic. Residues 150 to 172 (ALVCALLWALSCLVTTMEYVMCI) traverse the membrane as a helical segment. The Extracellular segment spans residues 173 to 185 (DREEESHSRNDCR). Residues 186 to 206 (AVIIFIAILSFLVFTPLMLVS) traverse the membrane as a helical segment. Over 207 to 224 (STILVVKIRKNTWASHSS) the chain is Cytoplasmic. Residues 225 to 245 (KLYIVIMVTIIIFLIFAMPMR) traverse the membrane as a helical segment. At 246–263 (LLYLLYYEYWSTFGNLHH) the chain is on the extracellular side. A helical membrane pass occupies residues 264–284 (ISLLFSTINSSANPFIYFFVG). Over 285–325 (SSKKKRFKESLKVVLTRAFKDEMQPRRQKDNCNTVTVETVV) the chain is Cytoplasmic.

This sequence belongs to the G-protein coupled receptor 1 family. In terms of assembly, interacts with AGTR1. Interacts with FLNA (via filamin repeat 21); increases PKA-mediated phosphorylation of FLNA.

It localises to the cell membrane. Functionally, receptor for angiotensin 1-7. Acts specifically as a functional antagonist of AGTR1 (angiotensin-2 type 1 receptor), although it up-regulates AGTR1 receptor levels. Positive regulation of AGTR1 levels occurs through activation of the G-proteins GNA11 and GNAQ, and stimulation of the protein kinase C signaling cascade. The antagonist effect on AGTR1 function is probably due to AGTR1 being physically altered by MAS1. The sequence is that of Proto-oncogene Mas (MAS1) from Homo sapiens (Human).